Consider the following 237-residue polypeptide: Small ribosomal subunit protein uS5 (237 aa).

The segment at 1–59 is disordered; sequence MADETNLEGVAAVEATGGEPQREGRGRGRGRGGNDRGGERGGRGRRDDRRGRGNNDEEG. Positions 20–55 are enriched in basic and acidic residues; sequence PQREGRGRGRGRGGNDRGGERGGRGRRDDRRGRGNN. One can recognise an S5 DRBM domain in the interval 63-126; sequence LIEKLVHINR…AAAKRAMVRV (64 aa).

This sequence belongs to the universal ribosomal protein uS5 family. Part of the 30S ribosomal subunit. Contacts proteins S4 and S8.

With S4 and S12 plays an important role in translational accuracy. In terms of biological role, located at the back of the 30S subunit body where it stabilizes the conformation of the head with respect to the body. The sequence is that of Small ribosomal subunit protein uS5 from Novosphingobium aromaticivorans (strain ATCC 700278 / DSM 12444 / CCUG 56034 / CIP 105152 / NBRC 16084 / F199).